Consider the following 233-residue polypeptide: Large ribosomal subunit protein uL1 (233 aa).

It belongs to the universal ribosomal protein uL1 family. As to quaternary structure, part of the 50S ribosomal subunit.

Its function is as follows. Binds directly to 23S rRNA. The L1 stalk is quite mobile in the ribosome, and is involved in E site tRNA release. Protein L1 is also a translational repressor protein, it controls the translation of the L11 operon by binding to its mRNA. This is Large ribosomal subunit protein uL1 from Buchnera aphidicola subsp. Baizongia pistaciae (strain Bp).